Here is a 120-residue protein sequence, read N- to C-terminus: NAD(P)H-quinone oxidoreductase subunit 3, chloroplastic (120 aa).

Helical transmembrane passes span 9-29 (IFWAFLIISSVIPIFAFIISG), 60-80 (ICYYMFALVFVVFDVETVFLY), and 88-108 (ILGVSVFIEALIFVLILIVGS).

Belongs to the complex I subunit 3 family. In terms of assembly, NDH is composed of at least 16 different subunits, 5 of which are encoded in the nucleus.

Its subcellular location is the plastid. It is found in the chloroplast thylakoid membrane. The enzyme catalyses a plastoquinone + NADH + (n+1) H(+)(in) = a plastoquinol + NAD(+) + n H(+)(out). It carries out the reaction a plastoquinone + NADPH + (n+1) H(+)(in) = a plastoquinol + NADP(+) + n H(+)(out). In terms of biological role, NDH shuttles electrons from NAD(P)H:plastoquinone, via FMN and iron-sulfur (Fe-S) centers, to quinones in the photosynthetic chain and possibly in a chloroplast respiratory chain. The immediate electron acceptor for the enzyme in this species is believed to be plastoquinone. Couples the redox reaction to proton translocation, and thus conserves the redox energy in a proton gradient. This Morus indica (Mulberry) protein is NAD(P)H-quinone oxidoreductase subunit 3, chloroplastic.